Consider the following 217-residue polypeptide: Elongation factor Ts (217 aa).

Positions 82 to 85 (TDFV) are involved in Mg(2+) ion dislocation from EF-Tu.

Belongs to the EF-Ts family.

It is found in the cytoplasm. Associates with the EF-Tu.GDP complex and induces the exchange of GDP to GTP. It remains bound to the aminoacyl-tRNA.EF-Tu.GTP complex up to the GTP hydrolysis stage on the ribosome. This is Elongation factor Ts from Desulfitobacterium hafniense (strain DSM 10664 / DCB-2).